We begin with the raw amino-acid sequence, 174 residues long: Small ribosomal subunit protein bS16 (174 aa).

Positions 81–174 (QRFTGEPAPP…DATTDATPSA (94 aa)) are disordered. Positions 87–97 (PAPPPMKTAPP) are enriched in pro residues. Residues 98 to 118 (KPDKKALFEAAAKEAAGEPRA) show a composition bias toward basic and acidic residues. Low complexity predominate over residues 135–158 (ETTPAAEAAPDAAASADEPAGGAS). Residues 160 to 174 (AAESQDATTDATPSA) show a composition bias toward polar residues.

The protein belongs to the bacterial ribosomal protein bS16 family.

The chain is Small ribosomal subunit protein bS16 from Acidothermus cellulolyticus (strain ATCC 43068 / DSM 8971 / 11B).